The following is a 912-amino-acid chain: Lateral signaling target protein 2 homolog (912 aa).

Residues Asn323–Asn332 show a composition bias toward low complexity. Disordered regions lie at residues Asn323 to Tyr360, Ala455 to Gln610, Asn664 to Ala745, and Gly769 to Arg846. Residues Ser333 to Arg355 are compositionally biased toward basic and acidic residues. Residues Ala455–Asn468 are compositionally biased toward polar residues. Residues Ser486–Asp505 show a composition bias toward acidic residues. Basic residues predominate over residues Tyr530 to Ser544. 2 stretches are compositionally biased toward polar residues: residues Ser545–Lys556 and Val572–Pro590. Low complexity predominate over residues Ser591–Gln610. Residues Asp682–Glu699 are compositionally biased toward basic and acidic residues. Polar residues-rich tracts occupy residues Pro705–Tyr717, Pro735–Ala745, Glu780–Ser801, and Ser822–Ser834. The FYVE-type zinc finger occupies Asp850–Val910. Positions 856, 859, 872, 875, 880, 883, 902, and 905 each coordinate Zn(2+).

This sequence belongs to the lst-2 family.

In terms of biological role, negative regulator of epidermal growth factor receptor (EGFR) signaling. The chain is Lateral signaling target protein 2 homolog from Aedes aegypti (Yellowfever mosquito).